The following is a 342-amino-acid chain: Cytochrome f (342 aa).

An N-terminal signal peptide occupies residues 1-28 (MKKQWIAGAFGLTAALAGLVSVPQSALA). Heme contacts are provided by C48, C51, and H52. The chain crosses the membrane as a helical span at residues 305-325 (VTWLVAFLAAAFICQLLLVLK).

This sequence belongs to the cytochrome f family. In terms of assembly, the 4 large subunits of the cytochrome b6-f complex are cytochrome b6, subunit IV (17 kDa polypeptide, PetD), cytochrome f and the Rieske protein, while the 4 small subunits are PetG, PetL, PetM and PetN. The complex functions as a dimer. The cofactor is heme.

The protein resides in the cell inner membrane. In terms of biological role, component of the cytochrome b6-f complex, which mediates electron transfer between photosystem II (PSII) and photosystem I (PSI), cyclic electron flow around PSI, and state transitions. This is Cytochrome f (petA) from Gloeobacter violaceus (strain ATCC 29082 / PCC 7421).